The following is a 107-amino-acid chain: Nucleoid-associated protein RP866 (107 aa).

Belongs to the YbaB/EbfC family. In terms of assembly, homodimer.

The protein localises to the cytoplasm. It localises to the nucleoid. In terms of biological role, binds to DNA and alters its conformation. May be involved in regulation of gene expression, nucleoid organization and DNA protection. The sequence is that of Nucleoid-associated protein RP866 from Rickettsia prowazekii (strain Madrid E).